We begin with the raw amino-acid sequence, 246 residues long: Uridylate kinase (246 aa).

ATP is bound at residue 20 to 23; it reads KISG. Residues 28–33 form an involved in allosteric activation by GTP region; the sequence is GDQGYG. A UMP-binding site is contributed by G62. Residues G63 and R67 each contribute to the ATP site. UMP contacts are provided by residues D82 and 143–150; that span reads TGNPYFTT. Residues T170, Y176, and D179 each contribute to the ATP site.

This sequence belongs to the UMP kinase family. As to quaternary structure, homohexamer.

The protein resides in the cytoplasm. It carries out the reaction UMP + ATP = UDP + ADP. It functions in the pathway pyrimidine metabolism; CTP biosynthesis via de novo pathway; UDP from UMP (UMPK route): step 1/1. With respect to regulation, allosterically activated by GTP. Inhibited by UTP. In terms of biological role, catalyzes the reversible phosphorylation of UMP to UDP. This is Uridylate kinase from Cereibacter sphaeroides (strain ATCC 17025 / ATH 2.4.3) (Rhodobacter sphaeroides).